The primary structure comprises 309 residues: Tagatose-6-phosphate kinase 1 (309 aa).

The protein belongs to the carbohydrate kinase PfkB family. LacC subfamily.

The enzyme catalyses D-tagatofuranose 6-phosphate + ATP = D-tagatofuranose 1,6-bisphosphate + ADP + H(+). It participates in carbohydrate metabolism; D-tagatose 6-phosphate degradation; D-glyceraldehyde 3-phosphate and glycerone phosphate from D-tagatose 6-phosphate: step 1/2. This chain is Tagatose-6-phosphate kinase 1, found in Streptococcus agalactiae serotype III (strain NEM316).